Here is a 762-residue protein sequence, read N- to C-terminus: 5-methyltetrahydropteroyltriglutamate--homocysteine methyltransferase (762 aa).

5-methyltetrahydropteroyltri-L-glutamate contacts are provided by residues 17 to 20 (REWK) and K111. Residues 435-437 (IGS) and E488 contribute to the L-homocysteine site. L-methionine-binding positions include 435 to 437 (IGS) and E488. Residues 519 to 520 (RC) and W565 contribute to the 5-methyltetrahydropteroyltri-L-glutamate site. D603 is an L-homocysteine binding site. D603 serves as a coordination point for L-methionine. Residue E609 coordinates 5-methyltetrahydropteroyltri-L-glutamate. 3 residues coordinate Zn(2+): H645, C647, and E669. H698 acts as the Proton donor in catalysis. C730 contacts Zn(2+).

The protein belongs to the vitamin-B12 independent methionine synthase family. Zn(2+) is required as a cofactor.

It catalyses the reaction 5-methyltetrahydropteroyltri-L-glutamate + L-homocysteine = tetrahydropteroyltri-L-glutamate + L-methionine. It participates in amino-acid biosynthesis; L-methionine biosynthesis via de novo pathway; L-methionine from L-homocysteine (MetE route): step 1/1. Functionally, catalyzes the transfer of a methyl group from 5-methyltetrahydrofolate to homocysteine resulting in methionine formation. This Bacillus cereus (strain AH820) protein is 5-methyltetrahydropteroyltriglutamate--homocysteine methyltransferase.